The sequence spans 147 residues: Hemoglobin subunit epsilon (147 aa).

One can recognise a Globin domain in the interval 3–147; the sequence is HFTAEEKSTI…VATALAHKYH (145 aa). Phosphoserine is present on residues Ser-14 and Ser-51. Heme b is bound by residues His-64 and His-93.

This sequence belongs to the globin family. As to quaternary structure, heterotetramer of two alpha chains and two epsilon chains in early embryonic hemoglobin Gower-2; two zeta chains and two epsilon chains in early embryonic hemoglobin Gower-1. Red blood cells.

In terms of biological role, the epsilon chain is a beta-type chain of early mammalian embryonic hemoglobin. This chain is Hemoglobin subunit epsilon (HBE1), found in Propithecus verreauxi (White sifaka).